A 505-amino-acid chain; its full sequence is MKNEKKKSGIEPKVFFPPLIIVGILCWLTVRDLDAANVVINAVFSYVTNVWGWAFEWYMIVMLFGWFWLVFGPYAKKRLGDEKPEFSTASWIFMMFASCTSAAVLFWGSIEIYYYISTPPFGLEPNSTGAKEIGLAYSLFHWGPLPWATYSFLSVAFAYFFFVRKMDVIRPSSTLVPLVGEKHAKGLFGTIVDNFYLVALIFAMGTSLGLATPLVTECMQWLFGIPHTLQLDAIIITCWIILNAICVACGLQKGVRIASDMRSYLSFLMLGWVFIVSGASFIMNYFTDSVGMLLMHLPRMLFYTDAIGKGGFPQGWTVFYWAWWVIYAIQMSIFLARISRGRTVRELCFGMVMGLTASTWILWTVLGSNTLLLMDKNILNIPQLIEQHGVARAIIETWAALPLSTATMWGFFILCFIATVTLINACSYTLAMSTCREVRDGEEPPLLVRIGWSVLVGIIGIVLLALGGLKPIQTAIIAGGCPLFFVNIMVTLSFIKDAKVHWKDK.

The next 12 helical transmembrane spans lie at 10 to 30, 51 to 71, 92 to 112, 143 to 163, 195 to 215, 231 to 251, 263 to 283, 316 to 336, 347 to 367, 403 to 423, 446 to 466, and 475 to 495; these read IEPKVFFPPLIIVGILCWLTV, WGWAFEWYMIVMLFGWFWLVF, IFMMFASCTSAAVLFWGSIEI, GPLPWATYSFLSVAFAYFFFV, FYLVALIFAMGTSLGLATPLV, LDAIIITCWIILNAICVACGL, SYLSFLMLGWVFIVSGASFIM, WTVFYWAWWVIYAIQMSIFLA, LCFGMVMGLTASTWILWTVLG, LSTATMWGFFILCFIATVTLI, LLVRIGWSVLVGIIGIVLLAL, and AIIAGGCPLFFVNIMVTLSFI.

This sequence belongs to the BCCT transporter (TC 2.A.15) family. CaiT subfamily. In terms of assembly, homotrimer.

The protein resides in the cell inner membrane. It carries out the reaction 4-(trimethylamino)butanoate(in) + (R)-carnitine(out) = 4-(trimethylamino)butanoate(out) + (R)-carnitine(in). It participates in amine and polyamine metabolism; carnitine metabolism. Catalyzes the exchange of L-carnitine for gamma-butyrobetaine. The sequence is that of L-carnitine/gamma-butyrobetaine antiporter from Salmonella paratyphi A (strain ATCC 9150 / SARB42).